Consider the following 699-residue polypeptide: Glycine--tRNA ligase beta subunit (699 aa).

The protein belongs to the class-II aminoacyl-tRNA synthetase family. In terms of assembly, tetramer of two alpha and two beta subunits.

It localises to the cytoplasm. The catalysed reaction is tRNA(Gly) + glycine + ATP = glycyl-tRNA(Gly) + AMP + diphosphate. The protein is Glycine--tRNA ligase beta subunit of Baumannia cicadellinicola subsp. Homalodisca coagulata.